Reading from the N-terminus, the 387-residue chain is 1-deoxy-D-xylulose 5-phosphate reductoisomerase (387 aa).

The NADPH site is built by threonine 10, glycine 11, serine 12, valine 13, asparagine 38, and asparagine 119. Lysine 120 lines the 1-deoxy-D-xylulose 5-phosphate pocket. Glutamate 121 contacts NADPH. Position 145 (aspartate 145) interacts with Mn(2+). 4 residues coordinate 1-deoxy-D-xylulose 5-phosphate: serine 146, glutamate 147, serine 170, and histidine 193. Residue glutamate 147 coordinates Mn(2+). Glycine 199 lines the NADPH pocket. 1-deoxy-D-xylulose 5-phosphate is bound by residues serine 206, asparagine 211, lysine 212, and glutamate 215. Glutamate 215 contributes to the Mn(2+) binding site.

The protein belongs to the DXR family. Mg(2+) is required as a cofactor. It depends on Mn(2+) as a cofactor.

The catalysed reaction is 2-C-methyl-D-erythritol 4-phosphate + NADP(+) = 1-deoxy-D-xylulose 5-phosphate + NADPH + H(+). It participates in isoprenoid biosynthesis; isopentenyl diphosphate biosynthesis via DXP pathway; isopentenyl diphosphate from 1-deoxy-D-xylulose 5-phosphate: step 1/6. In terms of biological role, catalyzes the NADPH-dependent rearrangement and reduction of 1-deoxy-D-xylulose-5-phosphate (DXP) to 2-C-methyl-D-erythritol 4-phosphate (MEP). In Wolbachia sp. subsp. Drosophila simulans (strain wRi), this protein is 1-deoxy-D-xylulose 5-phosphate reductoisomerase.